The sequence spans 133 residues: Peptide methionine sulfoxide reductase MsrB (133 aa).

Positions 8-130 constitute a MsrB domain; that stretch reads LEEWRAMLDP…NSVCLDFKPR (123 aa). Residues Cys-47, Cys-50, Cys-96, and Cys-99 each contribute to the Zn(2+) site. The active-site Nucleophile is Cys-119.

Belongs to the MsrB Met sulfoxide reductase family. Zn(2+) serves as cofactor.

The enzyme catalyses L-methionyl-[protein] + [thioredoxin]-disulfide + H2O = L-methionyl-(R)-S-oxide-[protein] + [thioredoxin]-dithiol. The chain is Peptide methionine sulfoxide reductase MsrB from Pseudomonas putida (strain W619).